Reading from the N-terminus, the 140-residue chain is Con-Ins Im2 (140 aa).

An N-terminal signal peptide occupies residues M1–G29. Intrachain disulfides connect C35–C123, C50–C126, C62–C139, and C125–C130. Positions P64–R110 are cleaved as a propeptide — c peptide. E134 carries the 4-carboxyglutamate; partial modification.

The protein belongs to the insulin family. In terms of assembly, heterodimer of A and B chains; disulfide-linked. Expressed by the venom gland.

It is found in the secreted. This venom insulin facilitates prey capture by rapidly inducing hypoglycemic shock. Intraperitoneal injection of this peptide into zebrafish lowers blood glucose with the same potency than human insulin. In vivo, when applied to water, this peptide reduces overall locomotor activity of zebrafish larvae, observed as a significant decrease in the percentage of time spent swimming and movement frequency. The chain is Con-Ins Im2 from Conus imperialis (Imperial cone).